The sequence spans 668 residues: Probable serine/threonine-protein kinase abkB (668 aa).

2 disordered regions span residues 88 to 111 (YTNI…KTTA) and 132 to 162 (EVEE…DDNK). The span at 91–105 (IGGTSPNRQSVPENS) shows a compositional bias: polar residues. Residues 131 to 163 (KEVEEEIIDKNERGKEQEQENKQQKEQKDDNKS) are a coiled coil. The span at 138–162 (IDKNERGKEQEQENKQQKEQKDDNK) shows a compositional bias: basic and acidic residues. In terms of domain architecture, Protein kinase spans 314 to 668 (DFERLPINSA…EIPSTYHHHH (355 aa)). ATP is bound by residues 320–328 (INSASLAQV) and Lys346. Asp478 (proton acceptor) is an active-site residue.

The protein belongs to the protein kinase superfamily. ADCK protein kinase family.

The protein is Probable serine/threonine-protein kinase abkB (abkB) of Dictyostelium discoideum (Social amoeba).